Here is a 592-residue protein sequence, read N- to C-terminus: Aspartate--tRNA ligase (592 aa).

Position 180 (Glu-180) interacts with L-aspartate. The segment at Gln-204–Lys-207 is aspartate. Arg-226 is an L-aspartate binding site. Residues Arg-226–Glu-228 and Gln-235 each bind ATP. His-455 contributes to the L-aspartate binding site. Glu-489 contributes to the ATP binding site. Arg-496 lines the L-aspartate pocket. Gly-541–Arg-544 provides a ligand contact to ATP.

This sequence belongs to the class-II aminoacyl-tRNA synthetase family. Type 1 subfamily. Homodimer.

The protein resides in the cytoplasm. It catalyses the reaction tRNA(Asp) + L-aspartate + ATP = L-aspartyl-tRNA(Asp) + AMP + diphosphate. In terms of biological role, catalyzes the attachment of L-aspartate to tRNA(Asp) in a two-step reaction: L-aspartate is first activated by ATP to form Asp-AMP and then transferred to the acceptor end of tRNA(Asp). This Clostridium tetani (strain Massachusetts / E88) protein is Aspartate--tRNA ligase.